A 1020-amino-acid polypeptide reads, in one-letter code: Sodium/potassium-transporting ATPase subunit alpha-2 (1020 aa).

Residues 1-5 (MGRGA) constitute a propeptide that is removed on maturation. A disordered region spans residues 1–31 (MGRGAGREYSPAATTAENGGGKKKQKEKELD). The Cytoplasmic portion of the chain corresponds to 6 to 85 (GREYSPAATT…NALTPPPTTP (80 aa)). Ser10 carries the post-translational modification Phosphoserine. Residues 80–82 (PPP) are interaction with phosphoinositide-3 kinase. A helical membrane pass occupies residues 86-106 (EWVKFCRQLFGGFSILLWIGA). Residues 107–129 (ILCFLAYGIQAAMEDEPSNDNLY) lie on the Extracellular side of the membrane. The chain crosses the membrane as a helical span at residues 130–150 (LGVVLAAVVIVTGCFSYYQEA). The Cytoplasmic segment spans residues 151 to 286 (KSSKIMDSFK…VGRTPIAMEI (136 aa)). Positions 212-227 (DNSSLTGESEPQTRSP) are enriched in polar residues. The tract at residues 212–231 (DNSSLTGESEPQTRSPEFTH) is disordered. The helical transmembrane segment at 287–306 (EHFIQLITGVAVFPGVSFFV) threads the bilayer. At 307–318 (LSLILGYSWLEA) the chain is on the extracellular side. Residues 319–336 (VIFLIGIIVANVPEGLLA) form a helical membrane-spanning segment. The Cytoplasmic segment spans residues 337–769 (TVTVCLTLTA…EEGRLVFDNL (433 aa)). Residue Asp374 is the 4-aspartylphosphate intermediate of the active site. Phosphoserine occurs at positions 439, 450, 496, and 559. Position 570 is a phosphothreonine (Thr570). Residues Ser587 and Ser672 each carry the phosphoserine modification. Mg(2+) is bound by residues Asp714 and Asp718. Residues 770–789 (KKSIAYTLTSNIPEITPFLL) traverse the membrane as a helical segment. Residues 790–799 (FIIANIPLPL) lie on the Extracellular side of the membrane. The helical transmembrane segment at 800–820 (GTVTILCIDLGTDMVPAISLA) threads the bilayer. Residues 821-840 (YEAAESDIMKRQPRNSQTDK) are Cytoplasmic-facing. Residue Ser826 is modified to Phosphoserine. Residues 841-863 (LVNERLISMAYGQIGMIQALGGF) traverse the membrane as a helical segment. At 864-915 (FTYFVILAENGFLPSRLLGIRLDWDDRTMNDLEDSYGQEWTYEQRKVVEFTC) the chain is on the extracellular side. Residues 916–935 (HTAFFASIVVVQWADLIICK) form a helical membrane-spanning segment. At 936 to 948 (TRRNSVFQQGMKN) the chain is on the cytoplasmic side. Residue Ser940 is modified to Phosphoserine; by PKA. The helical transmembrane segment at 949–967 (KILIFGLLEETALAAFLSY) threads the bilayer. The Extracellular segment spans residues 968 to 982 (CPGMGVALRMYPLKV). The helical transmembrane segment at 983-1003 (TWWFCAFPYSLLIFIYDEVRK) threads the bilayer. At 1004-1020 (LILRRYPGGWVEKETYY) the chain is on the cytoplasmic side.

Belongs to the cation transport ATPase (P-type) (TC 3.A.3) family. Type IIC subfamily. The sodium/potassium-transporting ATPase is composed of a catalytic alpha subunit, an auxiliary non-catalytic beta subunit and an additional regulatory subunit. Interacts with regulatory subunit FXYD1.

Its subcellular location is the membrane. It is found in the cell membrane. The enzyme catalyses K(+)(out) + Na(+)(in) + ATP + H2O = K(+)(in) + Na(+)(out) + ADP + phosphate + H(+). In terms of biological role, this is the catalytic component of the active enzyme, which catalyzes the hydrolysis of ATP coupled with the exchange of sodium and potassium ions across the plasma membrane. This action creates the electrochemical gradient of sodium and potassium, providing the energy for active transport of various nutrients. In Pongo abelii (Sumatran orangutan), this protein is Sodium/potassium-transporting ATPase subunit alpha-2 (ATP1A2).